The following is a 203-amino-acid chain: Histidine biosynthesis bifunctional protein HisIE (203 aa).

Residues 1–114 (MLTEQQRREL…FGDASHQWLF (114 aa)) form a phosphoribosyl-AMP cyclohydrolase region. The segment at 115–203 (LYQLEQLLAE…VIDDLRKRHQ (89 aa)) is phosphoribosyl-ATP pyrophosphohydrolase.

This sequence in the N-terminal section; belongs to the PRA-CH family. In the C-terminal section; belongs to the PRA-PH family.

The protein localises to the cytoplasm. It carries out the reaction 1-(5-phospho-beta-D-ribosyl)-ATP + H2O = 1-(5-phospho-beta-D-ribosyl)-5'-AMP + diphosphate + H(+). It catalyses the reaction 1-(5-phospho-beta-D-ribosyl)-5'-AMP + H2O = 1-(5-phospho-beta-D-ribosyl)-5-[(5-phospho-beta-D-ribosylamino)methylideneamino]imidazole-4-carboxamide. Its pathway is amino-acid biosynthesis; L-histidine biosynthesis; L-histidine from 5-phospho-alpha-D-ribose 1-diphosphate: step 2/9. The protein operates within amino-acid biosynthesis; L-histidine biosynthesis; L-histidine from 5-phospho-alpha-D-ribose 1-diphosphate: step 3/9. The protein is Histidine biosynthesis bifunctional protein HisIE (hisI) of Salmonella typhi.